Reading from the N-terminus, the 155-residue chain is Myosin light chain alkali (155 aa).

EF-hand domains are found at residues 7-41 (REIE…LNLN) and 80-115 (GCYE…LGES).

In terms of assembly, myosin is a hexamer of 2 heavy chains and 4 light chains.

The chain is Myosin light chain alkali (Mlc1) from Drosophila pseudoobscura pseudoobscura (Fruit fly).